A 94-amino-acid polypeptide reads, in one-letter code: Integration host factor subunit beta (94 aa).

The protein belongs to the bacterial histone-like protein family. In terms of assembly, heterodimer of an alpha and a beta chain.

In terms of biological role, this protein is one of the two subunits of integration host factor, a specific DNA-binding protein that functions in genetic recombination as well as in transcriptional and translational control. The chain is Integration host factor subunit beta from Brucella melitensis biotype 2 (strain ATCC 23457).